Reading from the N-terminus, the 304-residue chain is Lipid droplet-associated triacylglycerol lipase (304 aa).

At 1–155 the chain is on the lumenal side; the sequence is MTVKEYTKSK…MGIKMTAALR (155 aa). N95 carries N-linked (GlcNAc...) asparagine glycosylation. The GXSXG motif lies at 107 to 111; that stretch reads GHSVG. The active-site Nucleophile is the S109. An intramembrane segment occupies 156–176; sequence YIPPLAHVVSLFSYIFFYWIL. The Lumenal portion of the chain corresponds to 177–304; the sequence is SEGFSRFIID…HAEYAINAFF (128 aa).

The protein belongs to the AB hydrolase superfamily. LDAH family.

It localises to the lipid droplet. The protein localises to the membrane. It carries out the reaction a triacylglycerol + H2O = a diacylglycerol + a fatty acid + H(+). Shows both triacylglycerol (TAG) lipase and ester hydrolase activities. May play a role in TAG homeostasis. In Saccharomyces cerevisiae (strain ATCC 204508 / S288c) (Baker's yeast), this protein is Lipid droplet-associated triacylglycerol lipase.